We begin with the raw amino-acid sequence, 199 residues long: Putative inactive ribonuclease 11 (199 aa).

Residues 1-16 form the signal peptide; sequence METFPLLLLSLGLVLA. N61 carries an N-linked (GlcNAc...) asparagine glycan. H82 (proton acceptor) is an active-site residue. Residues N89 and N111 are each glycosylated (N-linked (GlcNAc...) asparagine). 2 disulfide bridges follow: C98/C158 and C114/C169. 115-119 is a substrate binding site; sequence KWSNN.

It belongs to the pancreatic ribonuclease family.

Its subcellular location is the secreted. The sequence is that of Putative inactive ribonuclease 11 (RNASE11) from Homo sapiens (Human).